Here is a 196-residue protein sequence, read N- to C-terminus: Aequorin-2 (196 aa).

Positions 1 to 7 (MTSKQYS) are excised as a propeptide. 4 EF-hand domains span residues 18–53 (RWIG…IVIN), 54–108 (NLGA…AKNE), 117–146 (DALF…AGII), and 147–182 (QSSE…FWYT). Ca(2+) contacts are provided by D31, N33, N35, K37, and E42. 3 may interact with the chromophore regions span residues 47-57 (ASDIVINNLGA), 62-72 (AKRHKDAVEAF), and 107-117 (NEPTLIRIWGD). Ca(2+)-binding residues include D124, D126, N128, E135, D160, D162, S164, Q166, and E171.

The protein belongs to the aequorin family. In terms of processing, the reduction of the disulfide bond is necessary to regenerate aequorin from apoaequorin.

Its function is as follows. Ca(2+)-dependent bioluminescence photoprotein. Displays an emission peak at 470 nm (blue light). Trace amounts of calcium ion trigger the intramolecular oxidation of the chromophore, coelenterazine into coelenteramide and CO(2) with the concomitant emission of light. In Aequorea victoria (Water jellyfish), this protein is Aequorin-2.